The sequence spans 226 residues: Thiopurine S-methyltransferase (226 aa).

Residues Trp16, Met51, Glu72, and Arg131 each coordinate S-adenosyl-L-methionine.

Belongs to the class I-like SAM-binding methyltransferase superfamily. TPMT family.

Its subcellular location is the cytoplasm. It catalyses the reaction S-adenosyl-L-methionine + a thiopurine = S-adenosyl-L-homocysteine + a thiopurine S-methylether.. In Francisella tularensis subsp. tularensis (strain SCHU S4 / Schu 4), this protein is Thiopurine S-methyltransferase.